Here is a 1638-residue protein sequence, read N- to C-terminus: ATP-dependent helicase brm (1638 aa).

Disordered stretches follow at residues 1–137 and 201–387; these read MASP…SQEN and QMQQ…GMPM. Over residues 7–51 the composition is skewed to pro residues; the sequence is ANSPMPPPQAPSPMAPPSQSPAPSPHSPYPHQQPGPLQGPPPPGH. The span at 52–63 shows a compositional bias: low complexity; that stretch reads PGAYGHPMQHGP. The span at 121-131 shows a compositional bias: pro residues; the sequence is GGPPGGPPPPE. The QLQ domain occupies 173-208; that stretch reads HLNGNQVNLLRTQITAYRLLARNKPISMQMQQALQA. Residues 201–211 are compositionally biased toward low complexity; it reads QMQQALQAAQQ. Composition is skewed to pro residues over residues 212–231, 238–253, 263–272, and 279–304; these read QPPP…PPPG, PPVP…PSAG, ASNPYGPPVP, and APPP…PPPI. 2 stretches are compositionally biased toward low complexity: residues 305-317 and 365-382; these read QQQQ…QQQS and PGSQ…QVPP. In terms of domain architecture, HSA spans 501-573; that stretch reads QKLEAERKRR…EKERMRRLMA (73 aa). The interval 691 to 730 is disordered; that stretch reads DEEDSCGSNDDHKPKVEEQPTATEDATDKAQATGNDEDAK. 2 positions are modified to phosphoserine: Ser695 and Ser698. Basic and acidic residues predominate over residues 699 to 708; that stretch reads NDDHKPKVEE. Over residues 710–724 the composition is skewed to polar residues; the sequence is PTATEDATDKAQATG. Residues 785 to 950 enclose the Helicase ATP-binding domain; the sequence is VSLYNNNLNG…WALLNFLLPS (166 aa). Residue 798-805 coordinates ATP; the sequence is DEMGLGKT. The DEGH box motif lies at 900–903; that stretch reads DEGH. One can recognise a Helicase C-terminal domain in the interval 1102–1263; the sequence is LLDRILPKLK…QKSTGSERQQ (162 aa). The span at 1380–1391 shows a compositional bias: acidic residues; it reads DGAEFDEEEEED. The tract at residues 1380–1412 is disordered; that stretch reads DGAEFDEEEEEDDSKRKRRKRKNRKEESDDDSL. Phosphoserine is present on residues Ser1407 and Ser1411. In terms of domain architecture, Bromo spans 1425–1530; sequence RSKKQMHKIM…KVFVGARQRI (106 aa). Residues 1544-1578 are disordered; sequence NTGEAHGNGGSDNSDNDDDDGGDDGSDDEEIATTS. Positions 1557-1574 are enriched in acidic residues; the sequence is SDNDDDDGGDDGSDDEEI. Phosphoserine occurs at positions 1591 and 1594. The segment covering 1592–1604 has biased composition (low complexity); sequence LASAPATPTQSSS. Residues 1592-1638 form a disordered region; the sequence is LASAPATPTQSSSNVSSGAATTSKKQTRRKRSQKKYTISDDDDDDMD. Residues 1616–1625 are compositionally biased toward basic residues; that stretch reads KQTRRKRSQK.

In terms of assembly, component of the Brahma complex, which is composed of brm, osa, mor, Snr1/Bap45, dalao/Bap111, Bap55, Bap60 and Act42A/Bap47. Interacts with asf1. Associates with the brm-HDAC3-erm repressor complex, composed of brm, HDAC3 and erm. Interacts with erm and HDAC3.

Its subcellular location is the nucleus. It carries out the reaction ATP + H2O = ADP + phosphate + H(+). In terms of biological role, transcriptional regulator. Acts as a coactivator, assisting one or more dedicated transcriptional activators of ANTC and BXC homeotic gene clusters. Can counteract the repressive effect of Polycomb protein. ATPase subunit of the Brahma complex, a multiprotein complex which is the equivalent of the yeast SWI/SNF complex and acts by remodeling the chromatin by catalyzing an ATP-dependent alteration in the structure of nucleosomal DNA. This complex can both serve as a transcriptional coactivator or corepressor, depending on the context. In type II neuroblast lineage, as part of the Brm remodeling complex, suppresses the formation of ectopic neuroblasts probably through interaction with erm and HDAC3. This Drosophila melanogaster (Fruit fly) protein is ATP-dependent helicase brm (brm).